Here is a 160-residue protein sequence, read N- to C-terminus: Transcription antitermination protein NusB (160 aa).

The protein belongs to the NusB family.

Its function is as follows. Involved in transcription antitermination. Required for transcription of ribosomal RNA (rRNA) genes. Binds specifically to the boxA antiterminator sequence of the ribosomal RNA (rrn) operons. The sequence is that of Transcription antitermination protein NusB from Rhizobium meliloti (strain 1021) (Ensifer meliloti).